Consider the following 138-residue polypeptide: Protein NrdI (138 aa).

This sequence belongs to the NrdI family.

Its function is as follows. Probably involved in ribonucleotide reductase function. This Mycobacterium leprae (strain TN) protein is Protein NrdI.